A 563-amino-acid chain; its full sequence is Inclusion body clearance protein IML2 (563 aa).

Belongs to the IML2 family. In terms of assembly, interacts with lipid droplet proteins.

The protein localises to the cytoplasm. It is found in the nucleus. In terms of biological role, inclusion body (IB) resident protein that interacts strongly with lipid droplet (LD) proteins. Involved in LD-mediated IB clearing after protein folding stress, probably by enabling access to the IBs of an LD-stored soluble sterol derivative that acts as a chaperone in inclusion clearing. This chain is Inclusion body clearance protein IML2, found in Schizosaccharomyces pombe (strain 972 / ATCC 24843) (Fission yeast).